Reading from the N-terminus, the 240-residue chain is Probable transcriptional regulatory protein HPP12_0160 (240 aa).

This sequence belongs to the TACO1 family.

The protein resides in the cytoplasm. In Helicobacter pylori (strain P12), this protein is Probable transcriptional regulatory protein HPP12_0160.